Here is a 62-residue protein sequence, read N- to C-terminus: Arabinogalactan protein 40 (62 aa).

A signal peptide spans 1–22 (MEMKNIFVALFISAVLVSSVSA). 3 positions are modified to 4-hydroxyproline: P28, P30, and P32. O-linked (Ara...) hydroxyproline glycosylation is found at P28, P30, and P32. The GPI-anchor amidated serine moiety is linked to residue S35. A propeptide spans 36-62 (SASTVAFPVVGSIVAASLSAFLALLLQ) (removed in mature form).

The protein belongs to the AG-peptide AGP family. Contains 4-hydroxyproline; hydroxylated on Pro-28, Pro-30 and Pro-32. Post-translationally, O-glycosylated on hydroxyprolines; noncontiguous hydroxylproline residues are glycosylated with arabinogalactan.

Its subcellular location is the cell membrane. Functionally, proteoglycan that seems to be implicated in diverse developmental roles such as differentiation, cell-cell recognition, embryogenesis and programmed cell death. This chain is Arabinogalactan protein 40, found in Arabidopsis thaliana (Mouse-ear cress).